A 542-amino-acid chain; its full sequence is Chaperonin GroEL (542 aa).

Residues 29–32, 86–90, G413, 476–478, and D492 contribute to the ATP site; these read TLGP, DGTTT, and NAA. The tract at residues 522-542 is disordered; that stretch reads PDENGPAAVPDMGMGGMGGMM.

Belongs to the chaperonin (HSP60) family. As to quaternary structure, forms a cylinder of 14 subunits composed of two heptameric rings stacked back-to-back. Interacts with the co-chaperonin GroES.

Its subcellular location is the cytoplasm. The catalysed reaction is ATP + H2O + a folded polypeptide = ADP + phosphate + an unfolded polypeptide.. Functionally, together with its co-chaperonin GroES, plays an essential role in assisting protein folding. The GroEL-GroES system forms a nano-cage that allows encapsulation of the non-native substrate proteins and provides a physical environment optimized to promote and accelerate protein folding. The chain is Chaperonin GroEL from Listeria monocytogenes serotype 4a (strain HCC23).